Consider the following 299-residue polypeptide: Pyridoxal 5'-phosphate synthase subunit PdxS (299 aa).

Asp24 contributes to the D-ribose 5-phosphate binding site. The active-site Schiff-base intermediate with D-ribose 5-phosphate is Lys81. Gly153 lines the D-ribose 5-phosphate pocket. Residue Arg165 coordinates D-glyceraldehyde 3-phosphate. D-ribose 5-phosphate contacts are provided by residues Gly219 and 240–241; that span reads GS.

This sequence belongs to the PdxS/SNZ family. In terms of assembly, in the presence of PdxT, forms a dodecamer of heterodimers.

The enzyme catalyses aldehydo-D-ribose 5-phosphate + D-glyceraldehyde 3-phosphate + L-glutamine = pyridoxal 5'-phosphate + L-glutamate + phosphate + 3 H2O + H(+). It participates in cofactor biosynthesis; pyridoxal 5'-phosphate biosynthesis. Catalyzes the formation of pyridoxal 5'-phosphate from ribose 5-phosphate (RBP), glyceraldehyde 3-phosphate (G3P) and ammonia. The ammonia is provided by the PdxT subunit. Can also use ribulose 5-phosphate and dihydroxyacetone phosphate as substrates, resulting from enzyme-catalyzed isomerization of RBP and G3P, respectively. The polypeptide is Pyridoxal 5'-phosphate synthase subunit PdxS (Methanococcus maripaludis (strain C6 / ATCC BAA-1332)).